Consider the following 668-residue polypeptide: NADH-ubiquinone oxidoreductase chain 5 (668 aa).

18 helical membrane passes run 1–21 (MYII…LFGH), 31–51 (IAVG…YEIL), 81–101 (LTSI…LYSM), 111–131 (TRFF…VTAD), 133–153 (FVQL…LINF), 178–198 (LFFG…SVIF), 211–231 (LLGY…IGVV), 251–271 (TPVS…FLVL), 283–303 (ILNI…TIGI), 311–331 (VIAY…GLLN), 339–359 (LTTH…VIHG), 375–395 (LMPL…GFPF), 421–441 (AIIG…LLIL), 462–482 (TNMV…GYLT), 519–539 (LLPL…YFNL), 566–586 (FDFL…YDVM), 629–649 (IVQA…IGFL), and 650–668 (YVEL…PKIK).

Belongs to the complex I subunit 5 family.

It localises to the mitochondrion inner membrane. The catalysed reaction is a ubiquinone + NADH + 5 H(+)(in) = a ubiquinol + NAD(+) + 4 H(+)(out). Core subunit of the mitochondrial membrane respiratory chain NADH dehydrogenase (Complex I) that is believed to belong to the minimal assembly required for catalysis. Complex I functions in the transfer of electrons from NADH to the respiratory chain. The immediate electron acceptor for the enzyme is believed to be ubiquinone. In Dictyostelium citrinum (Slime mold), this protein is NADH-ubiquinone oxidoreductase chain 5 (nad5).